We begin with the raw amino-acid sequence, 585 residues long: Folylpolyglutamate synthase, mitochondrial (585 aa).

A mitochondrion-targeting transit peptide spans 1–39 (MSRARCHALFLAAVSPRGATTRVAVRRGLSAWPVLQEPD). An ATP-binding site is contributed by 103–106 (GKGS). Residues S127, E198, and H226 each coordinate Mg(2+). ATP is bound by residues R361 and D375. The tract at residues 477 to 497 (EEQVSPDPWSTPGQEQDGPAS) is disordered. Residue S537 is modified to Phosphoserine.

This sequence belongs to the folylpolyglutamate synthase family. As to quaternary structure, monomer. It depends on a monovalent cation as a cofactor.

The protein localises to the mitochondrion inner membrane. It is found in the mitochondrion matrix. The protein resides in the cytoplasm. The enzyme catalyses (6S)-5,6,7,8-tetrahydrofolyl-(gamma-L-Glu)(n) + L-glutamate + ATP = (6S)-5,6,7,8-tetrahydrofolyl-(gamma-L-Glu)(n+1) + ADP + phosphate + H(+). The protein operates within cofactor biosynthesis; tetrahydrofolylpolyglutamate biosynthesis. Its function is as follows. Catalyzes conversion of folates to polyglutamate derivatives allowing concentration of folate compounds in the cell and the intracellular retention of these cofactors, which are important substrates for most of the folate-dependent enzymes that are involved in one-carbon transfer reactions involved in purine, pyrimidine and amino acid synthesis. The sequence is that of Folylpolyglutamate synthase, mitochondrial (FPGS) from Bos taurus (Bovine).